The chain runs to 270 residues: Putative pyruvate, phosphate dikinase regulatory protein (270 aa).

Position 148–155 (148–155 (GVSRTSKT)) interacts with ADP.

This sequence belongs to the pyruvate, phosphate/water dikinase regulatory protein family. PDRP subfamily.

It carries out the reaction N(tele)-phospho-L-histidyl/L-threonyl-[pyruvate, phosphate dikinase] + ADP = N(tele)-phospho-L-histidyl/O-phospho-L-threonyl-[pyruvate, phosphate dikinase] + AMP + H(+). The enzyme catalyses N(tele)-phospho-L-histidyl/O-phospho-L-threonyl-[pyruvate, phosphate dikinase] + phosphate + H(+) = N(tele)-phospho-L-histidyl/L-threonyl-[pyruvate, phosphate dikinase] + diphosphate. Its function is as follows. Bifunctional serine/threonine kinase and phosphorylase involved in the regulation of the pyruvate, phosphate dikinase (PPDK) by catalyzing its phosphorylation/dephosphorylation. The protein is Putative pyruvate, phosphate dikinase regulatory protein of Bacillus cytotoxicus (strain DSM 22905 / CIP 110041 / 391-98 / NVH 391-98).